Consider the following 238-residue polypeptide: Uridylate kinase (238 aa).

12–15 (KLSG) lines the ATP pocket. The involved in allosteric activation by GTP stretch occupies residues 20–25 (GEKGFG). G54 contributes to the UMP binding site. 2 residues coordinate ATP: G55 and R59. Residues D74 and 135–142 (TGSPYFST) contribute to the UMP site. Residues N163, Y169, and D172 each contribute to the ATP site.

Belongs to the UMP kinase family. Homohexamer.

It is found in the cytoplasm. It carries out the reaction UMP + ATP = UDP + ADP. The protein operates within pyrimidine metabolism; CTP biosynthesis via de novo pathway; UDP from UMP (UMPK route): step 1/1. Allosterically activated by GTP. Inhibited by UTP. In terms of biological role, catalyzes the reversible phosphorylation of UMP to UDP. The polypeptide is Uridylate kinase (Lactococcus lactis subsp. lactis (strain IL1403) (Streptococcus lactis)).